Reading from the N-terminus, the 326-residue chain is Malate dehydrogenase (326 aa).

12–18 (GGTGQIA) contributes to the NAD(+) binding site. Substrate is bound by residues arginine 93 and arginine 99. NAD(+) is bound by residues asparagine 106, glutamine 113, and 130-132 (VGN). Substrate is bound by residues asparagine 132 and arginine 163. Histidine 188 serves as the catalytic Proton acceptor.

The protein belongs to the LDH/MDH superfamily. MDH type 2 family.

It catalyses the reaction (S)-malate + NAD(+) = oxaloacetate + NADH + H(+). Its function is as follows. Catalyzes the reversible oxidation of malate to oxaloacetate. In Chlamydia trachomatis serovar A (strain ATCC VR-571B / DSM 19440 / HAR-13), this protein is Malate dehydrogenase.